Here is a 578-residue protein sequence, read N- to C-terminus: Vacuolar protein 8 (578 aa).

ARM repeat units follow at residues 58 to 95, 96 to 135, 137 to 176, 178 to 217, 219 to 258, 262 to 301, 303 to 342, 344 to 384, and 428 to 467; these read NRAETDFFRGEPLSALSTLVYSDNVDLQRSASLTFAEI, TERDVREVDRDTLEPILFLLQSSDIEVQRAASAALGNLAV, ADNKVLIVALGGLAPLIRQMMSPNVEVQCNAVGCITNLAT, EDNKAKIARSGALGPLIRLAKSKDMRVQRNATGALLNMTH, DDNRQQLVNAGAIPVLVQLLSSSDVDVQYYCTTALSNIAV, NRKRLAQTESRLVQSLVHLMDSSTPKVQCQAALALRNLAS, EKYQLEIVRAKGLPPLLRLLQSSYLPLILSAVACIRNISI, PLNE…NLAA, and DELKPHLLNLGVFDVLIPLTESESIEVQGNSAAALGNLSS.

This sequence belongs to the beta-catenin family.

The protein localises to the vacuole membrane. In terms of biological role, functions in both vacuole inheritance and protein targeting from the cytoplasm to vacuole. This is Vacuolar protein 8 (vac8) from Aspergillus oryzae (strain ATCC 42149 / RIB 40) (Yellow koji mold).